A 488-amino-acid polypeptide reads, in one-letter code: Acetyl-CoA decarbonylase/synthase complex subunit gamma (488 aa).

Residues 1 to 61 (MPKKISAMDI…FEKNKKKIIE (61 aa)) form the 4Fe-4S domain. [4Fe-4S] cluster contacts are provided by Cys-19, Cys-22, Cys-27, and Cys-44.

Heterodimer of delta and gamma chains. The ACDS complex is made up of alpha, epsilon, beta, gamma and delta chains with a probable stoichiometry of (alpha(2)epsilon(2))(4)-beta(8)-(gamma(1)delta(1))(8). It depends on corrinoid as a cofactor. [4Fe-4S] cluster serves as cofactor.

The catalysed reaction is 5,6,7,8-tetrahydrosarcinapterin + methyl-Co(III)-[corrinoid Fe-S protein] = 5-methyltetrahydrosarcinapterin + Co(I)-[corrinoid Fe-S protein] + H(+). Its function is as follows. Part of a complex that catalyzes the reversible cleavage of acetyl-CoA, allowing autotrophic growth from CO(2). In Methanocaldococcus jannaschii (strain ATCC 43067 / DSM 2661 / JAL-1 / JCM 10045 / NBRC 100440) (Methanococcus jannaschii), this protein is Acetyl-CoA decarbonylase/synthase complex subunit gamma.